A 150-amino-acid polypeptide reads, in one-letter code: Urease accessory protein UreE (150 aa).

Belongs to the UreE family.

Its subcellular location is the cytoplasm. Functionally, involved in urease metallocenter assembly. Binds nickel. Probably functions as a nickel donor during metallocenter assembly. This Parasynechococcus marenigrum (strain WH8102) protein is Urease accessory protein UreE.